Here is a 584-residue protein sequence, read N- to C-terminus: Leucine-rich repeat and fibronectin type III domain-containing protein 1 (584 aa).

The N-terminal stretch at 1–17 is a signal peptide; sequence MERLVFCVLVFGALAKA. The LRRNT domain maps to 18–51; it reads QLCPGRCICQTISPTLTLLCAKTGLLFVPPTVDR. Residues 18 to 494 lie on the Extracellular side of the membrane; sequence QLCPGRCICQ…VPSQFLGGTM (477 aa). LRR repeat units follow at residues 52–73, 76–97, 100–121, 124–145, 149–170, 173–194, and 197–218; these read KTVE…DFLN, SLVH…AFMG, SLRA…QLKG, NLRH…SFDE, TIED…AIAR, NINT…TFTL, and KLVR…TLFQ. An N-linked (GlcNAc...) asparagine glycan is attached at asparagine 73. Residues 241–287 enclose the LRRCT domain; it reads NPLHCNCELLWLRRLTREDDLETCASPEHLMDKYFWSIQEEEFICEP. One can recognise an Ig-like domain in the interval 288 to 375; that stretch reads PLITKHQVTK…GIATAAVHVH (88 aa). A disulfide bridge links cysteine 310 with cysteine 359. 5 N-linked (GlcNAc...) asparagine glycosylation sites follow: asparagine 332, asparagine 341, asparagine 384, asparagine 408, and asparagine 421. Residues 393 to 414 form a disordered region; it reads DPGLSDISTSSRSSSNDSKTHS. The span at 397–409 shows a compositional bias: low complexity; it reads SDISTSSRSSSND. The helical transmembrane segment at 495–515 threads the bilayer; that stretch reads IIIIGGIIVASVLVFIIILMI. Over 516-584 the chain is Cytoplasmic; sequence RYKAYSGGGG…MVLPILHLLF (69 aa). The interval 539 to 564 is disordered; sequence HVHSQTNGSRSAATKQSEEPPESPAG. A compositionally biased stretch (polar residues) spans 540-553; it reads VHSQTNGSRSAATK.

It belongs to the LRFN family.

The protein localises to the membrane. It localises to the synapse. Functionally, involved in the regulation of excitatory synapses. This is Leucine-rich repeat and fibronectin type III domain-containing protein 1 (lrfn1) from Danio rerio (Zebrafish).